The following is a 95-amino-acid chain: Parvalbumin beta 3 (95 aa).

Position 1 is an N-acetylalanine (Ala-1). EF-hand domains are found at residues 39–66 (FFAI…FSAG) and 77–95 (DVDG…LVKA). Asp-44, Asp-46, Ser-48, Phe-50, Glu-52, Glu-55, Asp-77, Asp-79, Asp-81, Met-83, and Glu-88 together coordinate Ca(2+).

It belongs to the parvalbumin family.

In terms of biological role, in muscle, parvalbumin is thought to be involved in relaxation after contraction. It binds two calcium ions. This is Parvalbumin beta 3 from Merluccius paradoxus (Deep-water Cape hake).